Consider the following 487-residue polypeptide: Histamine H1 receptor (487 aa).

Residues 1-29 (MSLPNSSCLLEDKMCEGNKTTMASPQLMP) are Extracellular-facing. N-linked (GlcNAc...) asparagine glycans are attached at residues N5 and N18. Residues 30-50 (LVVVLSTICLVTVGLNLLVLY) traverse the membrane as a helical segment. The Cytoplasmic segment spans residues 51–64 (AVRSERKLHTVGNL). The helical transmembrane segment at 65-89 (YIVSLSVADLIVGAVVMPMNILYLL) threads the bilayer. Topologically, residues 90 to 97 (MSKWSLGR) are extracellular. Residues 98-123 (PLCLFWLSMDYVASTASIFSVFILCI) form a helical membrane-spanning segment. A disulfide bridge links C100 with C180. Residues D107 and T112 each contribute to the histamine site. Positions 107–112 (DYVAST) are important for agonist binding. The Cytoplasmic segment spans residues 124-144 (DRYRSVQQPLRYLKYRTKTRA). 2 positions are modified to phosphothreonine: T140 and T142. Residues 145-164 (SATILGAWFLSFLWVIPILG) traverse the membrane as a helical segment. Residues 165 to 188 (WNHFMQQTSVRREDKCETDFYDVT) are Extracellular-facing. Residues 189-211 (WFKVMTAIINFYLPTLLMLWFYA) traverse the membrane as a helical segment. Residue N198 participates in histamine binding. Topologically, residues 212–416 (KIYKAVRQHC…MNRERKAAKQ (205 aa)) are cytoplasmic. S230 is modified (phosphoserine). The span at 238 to 261 (KLRPENPKGDAKKPGKESPWEVLK) shows a compositional bias: basic and acidic residues. A disordered region spans residues 238-292 (KLRPENPKGDAKKPGKESPWEVLKRKPKDAGGGSVLKSPSQTXKEMKSPVVFSQE). A Phosphothreonine modification is found at T279. S344 and S347 each carry phosphoserine. The segment at 345 to 379 (EISEDQMLGDSQSFSRTDSDTTTETAPGKGKLRSG) is disordered. The span at 353–369 (GDSQSFSRTDSDTTTET) shows a compositional bias: polar residues. 3 positions are modified to phosphoserine: S380, S396, and S398. A helical membrane pass occupies residues 417–440 (LGFIMAAFILCWIPYFIFFMVIAF). The segment at 424 to 428 (FILCW) is important for agonist binding. Y431 contributes to the histamine binding site. C441 and C444 are disulfide-bonded. The Extracellular segment spans residues 441–446 (CKNCCN). A helical membrane pass occupies residues 447 to 469 (EHLHMFTIWLGYINSTLNPLIYP). Topologically, residues 470-487 (LCNENFKKTFKRILHIRS) are cytoplasmic.

This sequence belongs to the G-protein coupled receptor 1 family. Phosphorylation at sites in the second and third cytoplasmic loops independently contribute to agonist-induced receptor down-regulation.

The protein resides in the cell membrane. Its function is as follows. G-protein-coupled receptor for histamine, a biogenic amine that functions as an immune modulator and a neurotransmitter. Through the H1 receptor, histamine mediates the contraction of smooth muscles and increases capillary permeability due to contraction of terminal venules. Also mediates neurotransmission in the central nervous system and thereby regulates circadian rhythms, emotional and locomotor activities as well as cognitive functions. The protein is Histamine H1 receptor of Pan troglodytes (Chimpanzee).